Here is a 360-residue protein sequence, read N- to C-terminus: Photosystem II protein D1 (360 aa).

3 helical membrane passes run 29-46, 118-133, and 142-156; these read YVGWFGTLMIPTLLTATT, QFLIGIFCYMGRQWEL, and WICVAYSAPVSARTA. Pheophytin a is bound at residue Tyr126. [CaMn4O5] cluster is bound by residues Asp170 and Glu189. Residues 197-218 form a helical membrane-spanning segment; it reads FHMLGVAGVFGGSLFSAMHGSL. Residue His198 participates in chlorophyll a binding. Residues His215 and 264 to 265 contribute to the a quinone site; that span reads SF. His215 is a Fe cation binding site. His272 contacts Fe cation. The helical transmembrane segment at 274-288 threads the bilayer; sequence FLGAWPVIGIWFTAM. [CaMn4O5] cluster is bound by residues His332, Glu333, Asp342, and Ala344. A propeptide spanning residues 345-360 is cleaved from the precursor; it reads SGEQAPVALTAPAING.

The protein belongs to the reaction center PufL/M/PsbA/D family. PSII is composed of 1 copy each of membrane proteins PsbA, PsbB, PsbC, PsbD, PsbE, PsbF, PsbH, PsbI, PsbJ, PsbK, PsbL, PsbM, PsbT, PsbX, PsbY, PsbZ, Psb30/Ycf12, peripheral proteins PsbO, CyanoQ (PsbQ), PsbU, PsbV and a large number of cofactors. It forms dimeric complexes. The D1/D2 heterodimer binds P680, chlorophylls that are the primary electron donor of PSII, and subsequent electron acceptors. It shares a non-heme iron and each subunit binds pheophytin, quinone, additional chlorophylls, carotenoids and lipids. D1 provides most of the ligands for the Mn4-Ca-O5 cluster of the oxygen-evolving complex (OEC). There is also a Cl(-1) ion associated with D1 and D2, which is required for oxygen evolution. The PSII complex binds additional chlorophylls, carotenoids and specific lipids. serves as cofactor. Post-translationally, tyr-161 forms a radical intermediate that is referred to as redox-active TyrZ, YZ or Y-Z. In terms of processing, C-terminally processed by CtpA; processing is essential to allow assembly of the oxygen-evolving complex and thus photosynthetic growth.

The protein localises to the cellular thylakoid membrane. It carries out the reaction 2 a plastoquinone + 4 hnu + 2 H2O = 2 a plastoquinol + O2. Its function is as follows. Photosystem II (PSII) is a light-driven water:plastoquinone oxidoreductase that uses light energy to abstract electrons from H(2)O, generating O(2) and a proton gradient subsequently used for ATP formation. It consists of a core antenna complex that captures photons, and an electron transfer chain that converts photonic excitation into a charge separation. The D1/D2 (PsbA/PsbD) reaction center heterodimer binds P680, the primary electron donor of PSII as well as several subsequent electron acceptors. The protein is Photosystem II protein D1 of Synechocystis sp. (strain PCC 6714) (Aphanocapsa sp. (strain PCC 6714)).